The sequence spans 737 residues: Dual specificity protein kinase KNS1 (737 aa).

2 disordered regions span residues 1 to 33 and 270 to 290; these read MSQN…SSNK and SSLR…NKSN. Positions 15–33 are enriched in polar residues; sequence ANMNNSTTTGPANNTSSNK. The segment covering 277–290 has biased composition (low complexity); that stretch reads SNGSSESASSNKSN. One can recognise a Protein kinase domain in the interval 313 to 720; that stretch reads FVVKDLLGQG…AKDALDHEWF (408 aa). Residues 319–327 and Lys343 each bind ATP; that span reads LGQGTFGKV. The active-site Proton acceptor is Asp440. Position 562 is a phosphothreonine (Thr562).

Belongs to the protein kinase superfamily. CMGC Ser/Thr protein kinase family. Lammer subfamily. Post-translationally, phosphorylated (auto-) on Ser/Thr/Tyr.

It catalyses the reaction L-seryl-[protein] + ATP = O-phospho-L-seryl-[protein] + ADP + H(+). The enzyme catalyses L-threonyl-[protein] + ATP = O-phospho-L-threonyl-[protein] + ADP + H(+). The catalysed reaction is L-tyrosyl-[protein] + ATP = O-phospho-L-tyrosyl-[protein] + ADP + H(+). Functionally, nonessential protein kinase. This chain is Dual specificity protein kinase KNS1 (KNS1), found in Saccharomyces cerevisiae (strain ATCC 204508 / S288c) (Baker's yeast).